The sequence spans 453 residues: Bifunctional protein GlmU (453 aa).

A pyrophosphorylase region spans residues 1–225 (MNIVILAAGT…EWETLGVNSK (225 aa)). UDP-N-acetyl-alpha-D-glucosamine-binding positions include 6–9 (LAAG), Lys20, Gln71, 76–77 (GT), 98–100 (YGD), Gly135, Glu150, Asn165, and Asn223. Residue Asp100 coordinates Mg(2+). A Mg(2+)-binding site is contributed by Asn223. Positions 226-246 (AQLAELERIHQRNIAEALLVD) are linker. The interval 247–453 (GVTLADPARL…GYVRPVKKKS (207 aa)) is N-acetyltransferase. The UDP-N-acetyl-alpha-D-glucosamine site is built by Arg329 and Lys347. Residue His359 is the Proton acceptor of the active site. Tyr362 and Asn373 together coordinate UDP-N-acetyl-alpha-D-glucosamine. Residues Ala376, 382-383 (NY), Ser401, and Ala419 contribute to the acetyl-CoA site.

In the N-terminal section; belongs to the N-acetylglucosamine-1-phosphate uridyltransferase family. This sequence in the C-terminal section; belongs to the transferase hexapeptide repeat family. In terms of assembly, homotrimer. Mg(2+) is required as a cofactor.

It is found in the cytoplasm. It catalyses the reaction alpha-D-glucosamine 1-phosphate + acetyl-CoA = N-acetyl-alpha-D-glucosamine 1-phosphate + CoA + H(+). The enzyme catalyses N-acetyl-alpha-D-glucosamine 1-phosphate + UTP + H(+) = UDP-N-acetyl-alpha-D-glucosamine + diphosphate. It participates in nucleotide-sugar biosynthesis; UDP-N-acetyl-alpha-D-glucosamine biosynthesis; N-acetyl-alpha-D-glucosamine 1-phosphate from alpha-D-glucosamine 6-phosphate (route II): step 2/2. The protein operates within nucleotide-sugar biosynthesis; UDP-N-acetyl-alpha-D-glucosamine biosynthesis; UDP-N-acetyl-alpha-D-glucosamine from N-acetyl-alpha-D-glucosamine 1-phosphate: step 1/1. Its pathway is bacterial outer membrane biogenesis; LPS lipid A biosynthesis. Its function is as follows. Catalyzes the last two sequential reactions in the de novo biosynthetic pathway for UDP-N-acetylglucosamine (UDP-GlcNAc). The C-terminal domain catalyzes the transfer of acetyl group from acetyl coenzyme A to glucosamine-1-phosphate (GlcN-1-P) to produce N-acetylglucosamine-1-phosphate (GlcNAc-1-P), which is converted into UDP-GlcNAc by the transfer of uridine 5-monophosphate (from uridine 5-triphosphate), a reaction catalyzed by the N-terminal domain. This chain is Bifunctional protein GlmU, found in Burkholderia lata (strain ATCC 17760 / DSM 23089 / LMG 22485 / NCIMB 9086 / R18194 / 383).